Here is a 274-residue protein sequence, read N- to C-terminus: 2-dehydro-3-deoxyphosphooctonate aldolase (274 aa).

This sequence belongs to the KdsA family.

It localises to the cytoplasm. It catalyses the reaction D-arabinose 5-phosphate + phosphoenolpyruvate + H2O = 3-deoxy-alpha-D-manno-2-octulosonate-8-phosphate + phosphate. The protein operates within carbohydrate biosynthesis; 3-deoxy-D-manno-octulosonate biosynthesis; 3-deoxy-D-manno-octulosonate from D-ribulose 5-phosphate: step 2/3. It functions in the pathway bacterial outer membrane biogenesis; lipopolysaccharide biosynthesis. In Rickettsia bellii (strain OSU 85-389), this protein is 2-dehydro-3-deoxyphosphooctonate aldolase.